The following is a 166-amino-acid chain: MGQMFNPLDFVYIAEFLEESKVDKKEAKNRTIIGRYYYASFLFLRGILKENLKNYNSKEAKEFLYLIELSNSHKIILDFLNVLKKEDGKFRRVYNALSILRDLRNASDYELESPARVKSIKEMVDFNDDYYVELSKNKYKIIVNSKSDVENILKDRSKIDKILRKI.

This sequence to M.jannaschii MJ0992.

This is an uncharacterized protein from Methanocaldococcus jannaschii (strain ATCC 43067 / DSM 2661 / JAL-1 / JCM 10045 / NBRC 100440) (Methanococcus jannaschii).